A 215-amino-acid polypeptide reads, in one-letter code: Cytochrome b6 (215 aa).

The chain crosses the membrane as a helical span at residues 32-52; the sequence is IFYCLGGITLTCFLVQVATGF. Cys-35 provides a ligand contact to heme c. His-86 and His-100 together coordinate heme b. 3 consecutive transmembrane segments (helical) span residues 90–110, 116–136, and 186–206; these read ASMM…TGGF, LTWV…VTGY, and LHTF…FSMI. Heme b contacts are provided by His-187 and His-202.

It belongs to the cytochrome b family. PetB subfamily. In terms of assembly, the 4 large subunits of the cytochrome b6-f complex are cytochrome b6, subunit IV (17 kDa polypeptide, PetD), cytochrome f and the Rieske protein, while the 4 small subunits are PetG, PetL, PetM and PetN. The complex functions as a dimer. Heme b is required as a cofactor. It depends on heme c as a cofactor.

It is found in the plastid. It localises to the chloroplast thylakoid membrane. Component of the cytochrome b6-f complex, which mediates electron transfer between photosystem II (PSII) and photosystem I (PSI), cyclic electron flow around PSI, and state transitions. The chain is Cytochrome b6 from Lotus japonicus (Lotus corniculatus var. japonicus).